We begin with the raw amino-acid sequence, 473 residues long: Arginine biosynthesis bifunctional protein ArgJ, mitochondrial (473 aa).

Substrate-binding residues include threonine 201, lysine 230, threonine 241, glutamate 328, asparagine 468, and threonine 473. The active-site Nucleophile is the threonine 241.

The protein belongs to the ArgJ family. As to quaternary structure, heterodimer of an alpha and a beta chain. Post-translationally, the alpha and beta chains are autoproteolytically processed from a single precursor protein within the mitochondrion.

The protein resides in the mitochondrion matrix. The enzyme catalyses N(2)-acetyl-L-ornithine + L-glutamate = N-acetyl-L-glutamate + L-ornithine. It catalyses the reaction L-glutamate + acetyl-CoA = N-acetyl-L-glutamate + CoA + H(+). The protein operates within amino-acid biosynthesis; L-arginine biosynthesis; L-ornithine and N-acetyl-L-glutamate from L-glutamate and N(2)-acetyl-L-ornithine (cyclic): step 1/1. It participates in amino-acid biosynthesis; L-arginine biosynthesis; N(2)-acetyl-L-ornithine from L-glutamate: step 1/4. Catalyzes two activities which are involved in the cyclic version of arginine biosynthesis: the synthesis of acetylglutamate from glutamate and acetyl-CoA, and of ornithine by transacetylation between acetylornithine and glutamate. This chain is Arginine biosynthesis bifunctional protein ArgJ, mitochondrial, found in Paracoccidioides brasiliensis (strain Pb18).